A 123-amino-acid chain; its full sequence is Large ribosomal subunit protein uL24 (123 aa).

The tract at residues 100 to 123 is disordered; that stretch reads RRPDGSTYKAERSVRISRKTGKEI.

It belongs to the universal ribosomal protein uL24 family. In terms of assembly, part of the 50S ribosomal subunit.

Functionally, one of two assembly initiator proteins, it binds directly to the 5'-end of the 23S rRNA, where it nucleates assembly of the 50S subunit. One of the proteins that surrounds the polypeptide exit tunnel on the outside of the subunit. The protein is Large ribosomal subunit protein uL24 of Nocardioides sp. (strain ATCC BAA-499 / JS614).